A 487-amino-acid chain; its full sequence is 6-phosphogluconate dehydrogenase, decarboxylating 3, chloroplastic (487 aa).

An N-acetylmethionine modification is found at M1. NADP(+)-binding positions include 13–18, 36–38, 80–82, and N108; these read GLAVMG, NRT, and VKA. Residues N108 and 134-136 each bind substrate; that span reads SGG. Residue K188 is the Proton acceptor of the active site. 191–192 contacts substrate; that stretch reads HN. E195 functions as the Proton donor in the catalytic mechanism. Y196, K266, R293, R458, and H464 together coordinate substrate.

This sequence belongs to the 6-phosphogluconate dehydrogenase family. Forms homodimer. Forms heterodimers with PGD1 or PGD2.

It localises to the plastid. The protein localises to the chloroplast. Its subcellular location is the cytoplasm. The protein resides in the cytosol. It catalyses the reaction 6-phospho-D-gluconate + NADP(+) = D-ribulose 5-phosphate + CO2 + NADPH. Its pathway is carbohydrate degradation; pentose phosphate pathway; D-ribulose 5-phosphate from D-glucose 6-phosphate (oxidative stage): step 3/3. In terms of biological role, catalyzes the oxidative decarboxylation of 6-phosphogluconate to ribulose 5-phosphate and CO(2), with concomitant reduction of NADP to NADPH. The chain is 6-phosphogluconate dehydrogenase, decarboxylating 3, chloroplastic from Arabidopsis thaliana (Mouse-ear cress).